The chain runs to 2003 residues: Neurogenic locus notch homolog protein 4 (2003 aa).

An N-terminal signal peptide occupies residues 1–23 (MQPPSLLLLLLLLLLLCVSVVRP). EGF-like domains lie at 24–63 (RGLLCGSFPEPCANGGTCLSLSLGQGTCQCAPGFLGETCQ), 64–115 (FPDP…ERCQ), 118–155 (LEDPCPPSFCSKRGRCHIQASGRPQCSCMPGWTGEQCQ), and 156–192 (LRDFCSANPCVNGGVCLATYPQIQCHCPPGFEGHACE). The Extracellular segment spans residues 24–1447 (RGLLCGSFPE…TAPPANQLPW (1424 aa)). Intrachain disulfides connect Cys-28-Cys-41, Cys-35-Cys-51, Cys-53-Cys-62, Cys-68-Cys-80, Cys-74-Cys-103, Cys-105-Cys-114, Cys-122-Cys-133, Cys-127-Cys-143, Cys-145-Cys-154, Cys-160-Cys-171, Cys-165-Cys-180, Cys-182-Cys-191, Cys-198-Cys-211, Cys-205-Cys-220, Cys-222-Cys-231, Cys-238-Cys-249, Cys-243-Cys-262, Cys-264-Cys-273, Cys-280-Cys-291, Cys-285-Cys-300, Cys-302-Cys-311, Cys-318-Cys-332, Cys-326-Cys-341, Cys-343-Cys-352, Cys-359-Cys-370, Cys-364-Cys-379, Cys-381-Cys-390, Cys-396-Cys-407, Cys-401-Cys-418, Cys-420-Cys-429, Cys-436-Cys-452, Cys-446-Cys-461, Cys-463-Cys-472, Cys-479-Cys-490, Cys-484-Cys-499, Cys-501-Cys-510, Cys-517-Cys-528, Cys-522-Cys-537, Cys-539-Cys-548, Cys-555-Cys-566, Cys-560-Cys-575, Cys-577-Cys-586, Cys-593-Cys-604, Cys-598-Cys-613, Cys-615-Cys-624, Cys-629-Cys-640, Cys-634-Cys-649, and Cys-651-Cys-658. The region spanning 194-232 (DVNECFQDPGPCPKGTSCHNTLGSFQCLCPVGQEGPRCE) is the EGF-like 5; calcium-binding domain. The 41-residue stretch at 234-274 (RAGPCPPRGCSNGGTCQLMPEKDSTFHLCLCPPGFIGPDCE) folds into the EGF-like 6 domain. Residues 276-312 (NPDNCVSHQCQNGGTCQDGLDTYTCLCPETWTGWDCS) enclose the EGF-like 7; calcium-binding domain. In terms of domain architecture, EGF-like 8; calcium-binding spans 314–353 (DVDECETQGPPHCRNGGTCQNSAGSFHCVCVSGWGGTSCE). The EGF-like 9; calcium-binding domain maps to 355-391 (NLDDCIAATCAPGSTCIDRVGSFSCLCPPGRTGLLCH). In terms of domain architecture, EGF-like 10 spans 392 to 430 (LEDMCLSQPCHGDAQCSTNPLTGSTLCLCQPGYSGPTCH). The EGF-like 11; calcium-binding domain occupies 432-473 (DLDECLMAQQGPSPCEHGGSCLNTPGSFNCLCPPGYTGSRCE). The region spanning 475 to 511 (DHNECLSQPCHPGSTCLDLLATFHCLCPPGLEGQLCE) is the EGF-like 12; calcium-binding domain. Residues 513-549 (ETNECASAPCLNHADCHDLLNGFQCICLPGFSGTRCE) enclose the EGF-like 13; calcium-binding domain. Residues 551 to 587 (DIDECRSSPCANGGQCQDQPGAFHCKCLPGFEGPRCQ) enclose the EGF-like 14; calcium-binding domain. One can recognise an EGF-like 15; calcium-binding domain in the interval 589-625 (EVDECLSDPCPVGASCLDLPGAFFCLCPSGFTGQLCE). EGF-like domains follow at residues 626 to 659 (VPLCAPNLCQPKQICKDQKDKANCLCPDGSPGCA), 661 to 689 (PEDNCTCHHGHCQRSSCVCDVGWTGPECE), 691 to 727 (ELGGCISAPCAHGGTCYPQPSGYNCTCPTGYTGPTCS), 729 to 765 (EMTACHSGPCLNGGSCNPSPGGYYCTCPPSHTGPQCQ), 767 to 803 (STDYCVSAPCFNGGTCVNRPGTFSCLCAMGFQGPRCE), 806 to 842 (LRPSCADSPCRNRATCQDSPQGPRCLCPTGYTGGSCQ), 844 to 880 (LMDLCAQKPCPRNSHCLQTGPSFHCLCLQGWTGPLCN), 882 to 928 (PLSS…SLCQ), 930 to 966 (HVNPCESRPCQNGATCMAQPSGYLCQCAPGYDGQNCS), 968 to 1004 (ELDACQSQPCHNHGTCTPKPGGFHCACPPGFVGLRCE), 1006 to 1044 (DVDECLDQPCHPTGTAACHSLANAFYCQCLPGHTGQWCE), 1046 to 1085 (EIDPCHSQPCFHGGTCEATAGSPLGFICHCPKGFEGPTCS), 1087 to 1126 (RAPSCGFHHCHHGGLCLPSPKPGFPPRCACLSGYGGPDCL), and 1130 to 1171 (APKG…PRCQ). Asn-664 carries an N-linked (GlcNAc...) asparagine glycan. 47 disulfides stabilise this stretch: Cys-665–Cys-672, Cys-667–Cys-677, Cys-679–Cys-688, Cys-695–Cys-706, Cys-700–Cys-715, Cys-717–Cys-726, Cys-733–Cys-744, Cys-738–Cys-753, Cys-755–Cys-764, Cys-771–Cys-782, Cys-776–Cys-791, Cys-793–Cys-802, Cys-810–Cys-821, Cys-815–Cys-830, Cys-832–Cys-841, Cys-848–Cys-859, Cys-853–Cys-868, Cys-870–Cys-879, Cys-886–Cys-907, Cys-901–Cys-916, Cys-918–Cys-927, Cys-934–Cys-945, Cys-939–Cys-954, Cys-956–Cys-965, Cys-972–Cys-983, Cys-977–Cys-992, Cys-994–Cys-1003, Cys-1010–Cys-1023, Cys-1015–Cys-1032, Cys-1034–Cys-1043, Cys-1050–Cys-1061, Cys-1055–Cys-1073, Cys-1075–Cys-1084, Cys-1091–Cys-1102, Cys-1096–Cys-1114, Cys-1116–Cys-1125, Cys-1134–Cys-1146, Cys-1140–Cys-1159, Cys-1161–Cys-1170, Cys-1178–Cys-1191, Cys-1187–Cys-1203, Cys-1214–Cys-1238, Cys-1220–Cys-1233, Cys-1229–Cys-1245, Cys-1251–Cys-1277, Cys-1259–Cys-1272, and Cys-1268–Cys-1284. The N-linked (GlcNAc...) asparagine glycan is linked to Asn-714. An N-linked (GlcNAc...) asparagine glycan is attached at Asn-964. The N-linked (GlcNAc...) asparagine glycan is linked to Asn-1143. LNR repeat units lie at residues 1170 to 1213 (CQKP…PWKG), 1214 to 1250 (CPSHSRCWLLFRDGQCHPQCDSEECLFDGYDCETPPA), and 1251 to 1294 (CTPA…PEWG). Residues 1347–1371 (AEEKLGGTRDPTYQERAAPQTQPLG) are disordered. Residues 1448–1468 (PVLCSPVAGVILLALGALLVL) traverse the membrane as a helical segment. Residues 1469 to 2003 (QLIRRRRREH…PINQGGEGKK (535 aa)) are Cytoplasmic-facing. Positions 1485–1508 (PGFTRRPRTQSAPHRRRPPLGEDS) are disordered. Basic residues predominate over residues 1489 to 1502 (RRPRTQSAPHRRRP). ANK repeat units follow at residues 1633 to 1665 (TGETPLHLAARFSRPTAARRLLEAGANPNQPDR), 1666 to 1698 (AGRTPLHAAVAADAREVCQLLLRSRQTAVDART), 1700 to 1732 (DGTTPLMLAARLAVEDLVEELIAAQADVGARDK), 1733 to 1765 (WGKTALHWAAAVNNARAARSLLQAGADKDAQDN), and 1766 to 1798 (REQTPLFLAAREGAVEVAQLLLGLGAARELRDQ). Disordered regions lie at residues 1900–1927 (LSGVGAGGGPTPRGRRFSAGMRGPRPNP) and 1968–2003 (PPPCLTPSPERGSPQLDCGPPALQEMPINQGGEGKK).

This sequence belongs to the NOTCH family. Heterodimer of a C-terminal fragment N(TM) and a N-terminal fragment N(EC) which are probably linked by disulfide bonds. Interacts with MAML1, MAML2 and MAML3 which act as transcriptional coactivators for NOTCH4. In terms of assembly, (Microbial infection) Interacts with Epstein-Barr virus (EBV) RK-BARF0. Post-translationally, synthesized in the endoplasmic reticulum as an inactive form which is proteolytically cleaved by a furin-like convertase in the trans-Golgi network before it reaches the plasma membrane to yield an active, ligand-accessible form. Cleavage results in a C-terminal fragment N(TM) and a N-terminal fragment N(EC). Following ligand binding, it is cleaved by TNF-alpha converting enzyme (TACE) to yield a membrane-associated intermediate fragment called notch extracellular truncation (NEXT). This fragment is then cleaved by presenilin dependent gamma-secretase to release a notch-derived peptide containing the intracellular domain (NICD) from the membrane. In terms of processing, phosphorylated. As to expression, highly expressed in the heart, moderately in the lung and placenta and at low levels in the liver, skeletal muscle, kidney, pancreas, spleen, lymph node, thymus, bone marrow and fetal liver. No expression was seen in adult brain or peripheral blood leukocytes.

It localises to the cell membrane. The protein resides in the nucleus. In terms of biological role, functions as a receptor for membrane-bound ligands Jagged1, Jagged2 and Delta1 to regulate cell-fate determination. Upon ligand activation through the released notch intracellular domain (NICD) it forms a transcriptional activator complex with RBPJ/RBPSUH and activates genes of the enhancer of split locus. Affects the implementation of differentiation, proliferation and apoptotic programs. May regulate branching morphogenesis in the developing vascular system. The sequence is that of Neurogenic locus notch homolog protein 4 from Homo sapiens (Human).